The following is a 330-amino-acid chain: uncharacterized protein (330 aa).

Positions 4–242 constitute an ABC transporter domain; it reads LSIQNLVVEY…AGEVLFEQST (239 aa). Position 40–47 (40–47) interacts with ATP; the sequence is GPSGCGKT. Residue 210 to 330 coordinates a nucleoside 3',5'-cyclic phosphate; it reads DRVVELTPDF…LIEHRALAND (121 aa).

This sequence belongs to the ABC transporter superfamily. The complex is composed of two ATP-binding proteins (MT0079), two transmembrane proteins (MT0078) and a solute-binding protein.

Probably part of an ABC transporter complex. Probably responsible for energy coupling to the transport system. This is an uncharacterized protein from Mycobacterium tuberculosis (strain CDC 1551 / Oshkosh).